We begin with the raw amino-acid sequence, 418 residues long: Imidazolonepropionase (418 aa).

Fe(3+)-binding residues include histidine 80 and histidine 82. Zn(2+) contacts are provided by histidine 80 and histidine 82. Residues arginine 89, tyrosine 152, and histidine 185 each contribute to the 4-imidazolone-5-propanoate site. Tyrosine 152 provides a ligand contact to N-formimidoyl-L-glutamate. Histidine 250 contacts Fe(3+). Histidine 250 contacts Zn(2+). A 4-imidazolone-5-propanoate-binding site is contributed by glutamine 253. Aspartate 325 provides a ligand contact to Fe(3+). Aspartate 325 is a binding site for Zn(2+). N-formimidoyl-L-glutamate-binding residues include asparagine 327 and glycine 329. Serine 330 is a binding site for 4-imidazolone-5-propanoate.

This sequence belongs to the metallo-dependent hydrolases superfamily. HutI family. Requires Zn(2+) as cofactor. Fe(3+) serves as cofactor.

It localises to the cytoplasm. It carries out the reaction 4-imidazolone-5-propanoate + H2O = N-formimidoyl-L-glutamate. Its pathway is amino-acid degradation; L-histidine degradation into L-glutamate; N-formimidoyl-L-glutamate from L-histidine: step 3/3. Functionally, catalyzes the hydrolytic cleavage of the carbon-nitrogen bond in imidazolone-5-propanoate to yield N-formimidoyl-L-glutamate. It is the third step in the universal histidine degradation pathway. The polypeptide is Imidazolonepropionase (Solibacter usitatus (strain Ellin6076)).